Here is a 146-residue protein sequence, read N- to C-terminus: Large ribosomal subunit protein uL15 (146 aa).

Residues 1–13 (MKLHELKPSEGSR) are compositionally biased toward basic and acidic residues. Residues 1-54 (MKLHELKPSEGSRKVRNRVGRGIGSGNGKTAGKGHKGQNARSGGGVRPGFEGGQ) are disordered. Composition is skewed to gly residues over residues 21–31 (RGIGSGNGKTA) and 42–52 (SGGGVRPGFEG).

It belongs to the universal ribosomal protein uL15 family. As to quaternary structure, part of the 50S ribosomal subunit.

In terms of biological role, binds to the 23S rRNA. In Bacillus velezensis (strain DSM 23117 / BGSC 10A6 / LMG 26770 / FZB42) (Bacillus amyloliquefaciens subsp. plantarum), this protein is Large ribosomal subunit protein uL15.